A 415-amino-acid chain; its full sequence is Peptide chain release factor subunit 1 (415 aa).

It belongs to the eukaryotic release factor 1 family. Heterodimer of two subunits, one of which binds GTP.

The protein resides in the cytoplasm. Functionally, directs the termination of nascent peptide synthesis (translation) in response to the termination codons UAA, UAG and UGA. This chain is Peptide chain release factor subunit 1, found in Methanosarcina mazei (strain ATCC BAA-159 / DSM 3647 / Goe1 / Go1 / JCM 11833 / OCM 88) (Methanosarcina frisia).